The following is a 490-amino-acid chain: Betaine aldehyde dehydrogenase (490 aa).

2 residues coordinate K(+): threonine 26 and aspartate 93. 150–152 (GAW) contributes to the NAD(+) binding site. Lysine 162 (charge relay system) is an active-site residue. An NAD(+)-binding site is contributed by 176–179 (KPSE). A K(+)-binding site is contributed by valine 180. 230 to 233 (GVAT) contacts NAD(+). Leucine 246 provides a ligand contact to K(+). The active-site Proton acceptor is glutamate 252. Glycine 254, cysteine 286, and glutamate 387 together coordinate NAD(+). Residue cysteine 286 is the Nucleophile of the active site. A Cysteine sulfenic acid (-SOH) modification is found at cysteine 286. Lysine 457 and glycine 460 together coordinate K(+). Glutamate 464 (charge relay system) is an active-site residue.

Belongs to the aldehyde dehydrogenase family. Dimer of dimers. It depends on K(+) as a cofactor.

The catalysed reaction is betaine aldehyde + NAD(+) + H2O = glycine betaine + NADH + 2 H(+). Its pathway is amine and polyamine biosynthesis; betaine biosynthesis via choline pathway; betaine from betaine aldehyde: step 1/1. Involved in the biosynthesis of the osmoprotectant glycine betaine. Catalyzes the irreversible oxidation of betaine aldehyde to the corresponding acid. The sequence is that of Betaine aldehyde dehydrogenase from Stenotrophomonas maltophilia (strain R551-3).